The primary structure comprises 310 residues: Putative S-adenosyl-L-methionine-dependent methyltransferase MUL_2766 (310 aa).

S-adenosyl-L-methionine is bound by residues Asp131 and 160–161 (DL).

Belongs to the UPF0677 family.

Exhibits S-adenosyl-L-methionine-dependent methyltransferase activity. The polypeptide is Putative S-adenosyl-L-methionine-dependent methyltransferase MUL_2766 (Mycobacterium ulcerans (strain Agy99)).